Consider the following 709-residue polypeptide: Polyribonucleotide nucleotidyltransferase (709 aa).

Residues Asp486 and Asp492 each contribute to the Mg(2+) site. The KH domain maps to 553–612; it reads PRIHTIKINADKIKDVIGKGGSVIRALTEETGTTIEIEDDGTVKIAATSGEQAKQAIARI. In terms of domain architecture, S1 motif spans 622 to 690; it reads GRIYNGKVTR…RQGRIRLSMK (69 aa). A disordered region spans residues 690–709; it reads KEAQATQQEAAETSSEDPAN. A compositionally biased stretch (low complexity) spans 691–702; the sequence is EAQATQQEAAET.

Belongs to the polyribonucleotide nucleotidyltransferase family. As to quaternary structure, component of the RNA degradosome, which is a multiprotein complex involved in RNA processing and mRNA degradation. The cofactor is Mg(2+).

It localises to the cytoplasm. It carries out the reaction RNA(n+1) + phosphate = RNA(n) + a ribonucleoside 5'-diphosphate. Functionally, involved in mRNA degradation. Catalyzes the phosphorolysis of single-stranded polyribonucleotides processively in the 3'- to 5'-direction. This chain is Polyribonucleotide nucleotidyltransferase, found in Proteus mirabilis (strain HI4320).